Here is a 145-residue protein sequence, read N- to C-terminus: Heat shock protein hsp-16.2 (145 aa).

Residues 32–137 enclose the sHSP domain; sequence VCRISPSESS…QGRSIPIQQA (106 aa).

This sequence belongs to the small heat shock protein (HSP20) family.

This Caenorhabditis elegans protein is Heat shock protein hsp-16.2.